The sequence spans 639 residues: AP2-like ethylene-responsive transcription factor CRL5 (639 aa).

Disordered stretches follow at residues 25–59 (PHMASSTMDEHHHVHHHQQQQQQQQQQQHHQQQQH) and 258–277 (GRKRGGAGGGGQKQPVHHRK). Low complexity predominate over residues 43–59 (QQQQQQQQQQHHQQQQH). 2 consecutive DNA-binding regions (AP2/ERF) follow at residues 288–351 (QYRG…INFP) and 387–445 (MYRG…TNFD). Over residues 547-561 (QQQQQHMSMSAASSL) the composition is skewed to low complexity. A disordered region spans residues 547-579 (QQQQQHMSMSAASSLVTSLSNSREGSPDRGGGL).

Belongs to the AP2/ERF transcription factor family. AP2 subfamily. In terms of tissue distribution, highly expressed at the base of the stem. Expressed in stems. Expressed a low levels in crown roots and seeds. Expressed in the stem region where adventitious (crown) root initiation occurs.

Its subcellular location is the nucleus. Functionally, acts as a positive regulator of adventitious (crown) root formation by promoting its initiation. Promotes adventitious root initiation through repression of cytokinin signaling by positively regulating the two-component response regulator RR1. Regulated by the auxin response factor and transcriptional activator ARF23/ARF1. This chain is AP2-like ethylene-responsive transcription factor CRL5, found in Oryza sativa subsp. japonica (Rice).